The sequence spans 170 residues: Peroxidase 2 (170 aa).

A glycan (N-linked (GlcNAc...) asparagine) is linked at Asn9. His24 contributes to the heme b binding site. Position 25 (Thr25) interacts with Ca(2+). Cys31 and Cys59 are oxidised to a cystine. Positions 73, 76, and 81 each coordinate Ca(2+).

It belongs to the peroxidase family. Classical plant (class III) peroxidase subfamily. Ca(2+) serves as cofactor. Heme b is required as a cofactor.

The catalysed reaction is 2 a phenolic donor + H2O2 = 2 a phenolic radical donor + 2 H2O. Its function is as follows. Removal of H(2)O(2), oxidation of toxic reductants, biosynthesis and degradation of lignin, suberization, auxin catabolism, response to environmental stresses such as wounding, pathogen attack and oxidative stress. These functions might be dependent on each isozyme/isoform in each plant tissue. In terms of biological role, involved in defense response to powdery meldew fungus. This Hordeum vulgare (Barley) protein is Peroxidase 2.